Reading from the N-terminus, the 304-residue chain is Killer cell immunoglobulin-like receptor 2DS4 (304 aa).

The signal sequence occupies residues 1-21 (MSLMVIIMACVGFFLLQGAWP). At 22 to 245 (QEGVHRKPSF…SKTGNPRHLH (224 aa)) the chain is on the extracellular side. Ig-like C2-type domains are found at residues 42–107 (EETV…VPHS) and 142–205 (GENV…FRDA). An intrachain disulfide couples Cys49 to Cys100. Residues Asn67, Asn84, Asn144, Asn178, and Asn211 are each glycosylated (N-linked (GlcNAc...) asparagine). Cys149 and Cys198 are disulfide-bonded. The tract at residues 220–239 (VTGNPSNSWPSPTEPSSKTG) is disordered. The chain crosses the membrane as a helical span at residues 246–265 (VLIGTSVVKIPFTILLFFLL). At 266 to 304 (HRWCSDKKNAAVMDQEPAGNRTVNSEDSDEQDHQEVSYA) the chain is on the cytoplasmic side. The disordered stretch occupies residues 280–304 (QEPAGNRTVNSEDSDEQDHQEVSYA).

The protein belongs to the immunoglobulin superfamily. Interacts with HLA-F; this interaction is direct.

The protein localises to the cell membrane. Functionally, receptor on natural killer (NK) cells for HLA-C alleles. Does not inhibit the activity of NK cells. The polypeptide is Killer cell immunoglobulin-like receptor 2DS4 (Homo sapiens (Human)).